A 291-amino-acid chain; its full sequence is Light-independent protochlorophyllide reductase iron-sulfur ATP-binding protein (291 aa).

ATP contacts are provided by residues 10-15 and Lys-39; that span reads GIGKST. Ser-14 serves as a coordination point for Mg(2+). [4Fe-4S] cluster-binding residues include Cys-95 and Cys-129. Position 180 to 181 (180 to 181) interacts with ATP; the sequence is NR.

This sequence belongs to the NifH/BchL/ChlL family. Homodimer. Protochlorophyllide reductase is composed of three subunits; ChlL, ChlN and ChlB. [4Fe-4S] cluster is required as a cofactor.

It localises to the plastid. The protein resides in the chloroplast. It catalyses the reaction chlorophyllide a + oxidized 2[4Fe-4S]-[ferredoxin] + 2 ADP + 2 phosphate = protochlorophyllide a + reduced 2[4Fe-4S]-[ferredoxin] + 2 ATP + 2 H2O. The protein operates within porphyrin-containing compound metabolism; chlorophyll biosynthesis (light-independent). In terms of biological role, component of the dark-operative protochlorophyllide reductase (DPOR) that uses Mg-ATP and reduced ferredoxin to reduce ring D of protochlorophyllide (Pchlide) to form chlorophyllide a (Chlide). This reaction is light-independent. The L component serves as a unique electron donor to the NB-component of the complex, and binds Mg-ATP. This chain is Light-independent protochlorophyllide reductase iron-sulfur ATP-binding protein, found in Pinus thunbergii (Japanese black pine).